Here is a 350-residue protein sequence, read N- to C-terminus: L-threonine 3-dehydrogenase (350 aa).

Cysteine 42 provides a ligand contact to Zn(2+). Active-site charge relay system residues include threonine 44 and histidine 47. Zn(2+) contacts are provided by histidine 67, glutamate 68, cysteine 97, cysteine 100, cysteine 103, and cysteine 111. NAD(+) contacts are provided by residues leucine 179, glutamate 199, arginine 204, 266–268 (LGL), and 291–292 (IT).

Belongs to the zinc-containing alcohol dehydrogenase family. In terms of assembly, homotetramer. Zn(2+) serves as cofactor.

Its subcellular location is the cytoplasm. The enzyme catalyses L-threonine + NAD(+) = (2S)-2-amino-3-oxobutanoate + NADH + H(+). Its pathway is amino-acid degradation; L-threonine degradation via oxydo-reductase pathway; glycine from L-threonine: step 1/2. Catalyzes the NAD(+)-dependent oxidation of L-threonine to 2-amino-3-ketobutyrate. To a lesser extent, also catalyzes the oxidation of L-serine. In Thermococcus kodakarensis (strain ATCC BAA-918 / JCM 12380 / KOD1) (Pyrococcus kodakaraensis (strain KOD1)), this protein is L-threonine 3-dehydrogenase.